The primary structure comprises 86 residues: UPF0291 protein LBA1279 (86 aa).

2 stretches are compositionally biased toward basic and acidic residues: residues 1 to 27 and 65 to 75; these read MNKD…KENE and NGKEVTSEKAK. 2 disordered regions span residues 1–36 and 65–86; these read MNKD…EEEE and NGKE…LRKD. Residues 76–86 are compositionally biased toward basic residues; sequence QAQRKKGLRKD.

The protein belongs to the UPF0291 family.

It is found in the cytoplasm. In Lactobacillus acidophilus (strain ATCC 700396 / NCK56 / N2 / NCFM), this protein is UPF0291 protein LBA1279.